The chain runs to 461 residues: Cysteine--tRNA ligase (461 aa).

Residue cysteine 28 coordinates Zn(2+). Residues 30 to 40 (ITVYDLCHIGH) carry the 'HIGH' region motif. Zn(2+) contacts are provided by cysteine 209, histidine 234, and glutamate 238. The 'KMSKS' region motif lies at 266 to 270 (KMSKS). An ATP-binding site is contributed by lysine 269.

The protein belongs to the class-I aminoacyl-tRNA synthetase family. Monomer. Zn(2+) serves as cofactor.

Its subcellular location is the cytoplasm. It carries out the reaction tRNA(Cys) + L-cysteine + ATP = L-cysteinyl-tRNA(Cys) + AMP + diphosphate. The sequence is that of Cysteine--tRNA ligase from Shigella sonnei (strain Ss046).